A 930-amino-acid polypeptide reads, in one-letter code: Isoleucine--tRNA ligase (930 aa).

A 'HIGH' region motif is present at residues 57–67; it reads PYANGNIHVGH. L-isoleucyl-5'-AMP is bound at residue Glu-554. Residues 595 to 599 carry the 'KMSKS' region motif; it reads KMSKS. Lys-598 is a binding site for ATP. Zn(2+) is bound by residues Cys-888, Cys-891, Cys-908, and Cys-911.

The protein belongs to the class-I aminoacyl-tRNA synthetase family. IleS type 1 subfamily. In terms of assembly, monomer. Zn(2+) is required as a cofactor.

It localises to the cytoplasm. The catalysed reaction is tRNA(Ile) + L-isoleucine + ATP = L-isoleucyl-tRNA(Ile) + AMP + diphosphate. In terms of biological role, catalyzes the attachment of isoleucine to tRNA(Ile). As IleRS can inadvertently accommodate and process structurally similar amino acids such as valine, to avoid such errors it has two additional distinct tRNA(Ile)-dependent editing activities. One activity is designated as 'pretransfer' editing and involves the hydrolysis of activated Val-AMP. The other activity is designated 'posttransfer' editing and involves deacylation of mischarged Val-tRNA(Ile). The protein is Isoleucine--tRNA ligase of Streptococcus sanguinis (strain SK36).